A 188-amino-acid chain; its full sequence is dCTP deaminase (188 aa).

DCTP contacts are provided by residues 111 to 116 (KSTYAR), 135 to 137 (TLE), Gln156, Tyr170, and Gln180. Residue Glu137 is the Proton donor/acceptor of the active site.

The protein belongs to the dCTP deaminase family. In terms of assembly, homotrimer.

It catalyses the reaction dCTP + H2O + H(+) = dUTP + NH4(+). Its pathway is pyrimidine metabolism; dUMP biosynthesis; dUMP from dCTP (dUTP route): step 1/2. Catalyzes the deamination of dCTP to dUTP. The chain is dCTP deaminase from Pseudomonas fluorescens (strain Pf0-1).